The sequence spans 314 residues: Ribosomal protein L11 methyltransferase (314 aa).

S-adenosyl-L-methionine contacts are provided by Thr-161, Gly-182, Asp-204, and Asn-248.

The protein belongs to the methyltransferase superfamily. PrmA family.

It is found in the cytoplasm. The enzyme catalyses L-lysyl-[protein] + 3 S-adenosyl-L-methionine = N(6),N(6),N(6)-trimethyl-L-lysyl-[protein] + 3 S-adenosyl-L-homocysteine + 3 H(+). Methylates ribosomal protein L11. The chain is Ribosomal protein L11 methyltransferase from Listeria monocytogenes serotype 1/2a (strain 10403S).